We begin with the raw amino-acid sequence, 222 residues long: Putative O-methyltransferase MAP_2558 (222 aa).

S-adenosyl-L-methionine is bound by residues Val49, Glu71, 73–74 (GT), Ser79, Asp97, and Ile98. Position 145 (Asp145) interacts with substrate. Asp147 lines the S-adenosyl-L-methionine pocket.

Belongs to the class I-like SAM-binding methyltransferase superfamily. Cation-dependent O-methyltransferase family.

This Mycolicibacterium paratuberculosis (strain ATCC BAA-968 / K-10) (Mycobacterium paratuberculosis) protein is Putative O-methyltransferase MAP_2558.